Consider the following 413-residue polypeptide: uncharacterized protein (413 aa).

Transmembrane regions (helical) follow at residues 22–42 (VLLV…TLIL), 270–290 (IIYV…ISIC), 312–332 (ILIQ…GNLI), and 379–399 (LIII…YPIY).

The protein belongs to the ABC-4 integral membrane protein family. LolC/E subfamily.

The protein resides in the cell membrane. This is an uncharacterized protein from Buchnera aphidicola subsp. Schizaphis graminum (strain Sg).